Here is a 379-residue protein sequence, read N- to C-terminus: Cytochrome b (379 aa).

4 consecutive transmembrane segments (helical) span residues 33-53, 77-98, 113-133, and 178-198; these read FGSL…FLAM, WLIR…FIHV, WNIG…GYVL, and FFAF…VHLL. Heme b contacts are provided by His83 and His97. Heme b-binding residues include His182 and His196. His201 is an a ubiquinone binding site. Transmembrane regions (helical) follow at residues 226 to 246, 288 to 308, 320 to 340, and 347 to 367; these read TKDL…TLFF, LGGV…PLLN, ITQT…WIGG, and FTTI…ILIP.

Belongs to the cytochrome b family. The cytochrome bc1 complex contains 11 subunits: 3 respiratory subunits (MT-CYB, CYC1 and UQCRFS1), 2 core proteins (UQCRC1 and UQCRC2) and 6 low-molecular weight proteins (UQCRH/QCR6, UQCRB/QCR7, UQCRQ/QCR8, UQCR10/QCR9, UQCR11/QCR10 and a cleavage product of UQCRFS1). This cytochrome bc1 complex then forms a dimer. The cofactor is heme b.

Its subcellular location is the mitochondrion inner membrane. Its function is as follows. Component of the ubiquinol-cytochrome c reductase complex (complex III or cytochrome b-c1 complex) that is part of the mitochondrial respiratory chain. The b-c1 complex mediates electron transfer from ubiquinol to cytochrome c. Contributes to the generation of a proton gradient across the mitochondrial membrane that is then used for ATP synthesis. This is Cytochrome b (MT-CYB) from Akodon azarae (Azara's grass mouse).